The primary structure comprises 1549 residues: Structural maintenance of chromosomes protein 4 (1549 aa).

Residues 1–78 (MPPKTSAAPP…LFSLQLPSRP (78 aa)) are disordered. The span at 26-36 (KPQKKTTKPVN) shows a compositional bias: basic residues. Over residues 37-59 (RHKEGSKDPEEELQRAVNEKFDG) the composition is skewed to basic and acidic residues. 121 to 128 (GPNGSGKS) is a binding site for ATP. Residues 326–604 (MKLEQRRRQR…QNSSCSSSNK (279 aa)) are a coiled coil. Basic and acidic residues-rich tracts occupy residues 396 to 407 (LSDLGTEETRRK) and 420 to 444 (AEAE…AERK). 2 disordered regions span residues 396 to 444 (LSDL…AERK) and 460 to 485 (KTAN…EEQK). Positions 619–734 (KSFHGRLGDL…GDSTQEAQRM (116 aa)) constitute an SMC hinge domain. 2 coiled-coil regions span residues 786 to 1058 (KAAE…KVNR) and 1144 to 1182 (EKIN…SIKA). Polar residues predominate over residues 1440 to 1459 (IQTTRDVTSRPQSKATTSGD). The interval 1440 to 1549 (IQTTRDVTSR…AIVDDDDDME (110 aa)) is disordered. A compositionally biased stretch (basic and acidic residues) spans 1460-1474 (GTERPASRSASRPES). Polar residues predominate over residues 1510-1523 (TPPSKRSNSASTPK).

Belongs to the SMC family. SMC4 subfamily. As to quaternary structure, component of the condensin I complex, which contains the mix-1/SMC2 and smc-4/SMC4 heterodimer, and three non SMC subunits that probably regulate the complex: dpy-26, capg-1 and dpy-28. Within the complex, interacts with mix-1, dpy-26, capg-1 and dpy-28. Component of the condensin II complex, which contains the mix-1/SMC2 and smc-4/SMC4 heterodimer, and three non SMC subunits, kle-2, capg-2 and hcp-6 that probably regulate the complex. Within the complex, interacts with mix-1, kle-2, capg-2 and hcp-6. Interacts with smcl-1.

Its subcellular location is the nucleus. It is found in the chromosome. In terms of biological role, central component of the condensin I complex, a complex required for conversion of interphase chromatin into mitotic-like condense chromosomes. The condensin I complex introduces positive supercoils into relaxed DNA in the presence of type I topoisomerases. Converts nicked DNA into positive knotted forms in the presence of type II topoisomerases. Also a central component of the condensin II complex, a complex that seems to play a role in prophase chromosome condensation. Both the condensin complex I and II play a role in meiotic and mitotic chromosome segregation. Plays a role in robust cytokinesis upon the presence of chromatin obstructions. This Caenorhabditis elegans protein is Structural maintenance of chromosomes protein 4 (smc-4).